The chain runs to 151 residues: Protein archease-like (151 aa).

3 residues coordinate Ca(2+): Asp-20, Asp-150, and Ile-151.

Belongs to the archease family.

Functionally, component of the tRNA-splicing ligase complex required to facilitate the enzymatic turnover of catalytic subunit RtcB. This is Protein archease-like from Dictyostelium discoideum (Social amoeba).